Reading from the N-terminus, the 112-residue chain is C-type natriuretic peptide 3 (112 aa).

The signal sequence occupies residues 1-19 (MSLRAFMLCVCLLLQSVGA). A propeptide spanning residues 20 to 90 (RPASELQNLE…SKRSWGRYKK (71 aa)) is cleaved from the precursor. Positions 33–67 (QDQLSSTEHPEEDRLDRTREEPQLGGSSSREAADE) are disordered. Over residues 40–54 (EHPEEDRLDRTREEP) the composition is skewed to basic and acidic residues. Cysteine 96 and cysteine 112 are disulfide-bonded.

This sequence belongs to the natriuretic peptide family. Spinal cord, kidney, ovary, heart and spleen, and to a lower extent in brain and liver.

It is found in the secreted. In terms of biological role, exhibits natriuretic and vasodepressant activity. Has cGMP-stimulating activity. May help to regulate body fluid homeostasis in a variety of aquatic environments. This chain is C-type natriuretic peptide 3, found in Oryzias latipes (Japanese rice fish).